Reading from the N-terminus, the 661-residue chain is Ecdysteroid-phosphate phosphatase (661 aa).

Residues 16–57 (KQDVSPLQILLQMGFRRQRALKALAATGNRSVQLASDWLLTH) enclose the UBA domain. The region spanning 235–300 (ANHQVYKVTQ…PAVYTRRTAE (66 aa)) is the SH3 domain. Residue R409 is part of the active site. H410 (tele-phosphohistidine intermediate) is an active-site residue. H590 is an active-site residue.

As to quaternary structure, homodimer. As to expression, detected in non-diapause eggs, with highest expression between 2 and 5 days after oviposition. Not detected in other tissues tested.

The protein localises to the cytoplasm. The protein resides in the cytosol. It carries out the reaction ecdysone 22-phosphate + H2O = ecdysone + phosphate. It catalyses the reaction 20-hydroxyecdysone 22-phosphate + H2O = 20-hydroxyecdysone + phosphate. The catalysed reaction is 2-deoxyecdysone 22-phosphate + H2O = 2-deoxyecdysone + phosphate. The enzyme catalyses O-phospho-L-tyrosyl-[protein] + H2O = L-tyrosyl-[protein] + phosphate. Competitively inhibited by 4-nitrophenyl phosphate (para-nitrophenylphosphate, pNPP). Also inhibited by tungstate, vanadate, and phosphate. Steroid phosphatase which catalyzes the conversion of inactive phosphorylated ecdysteroids into their active forms. Shows high activity towards ecdysone 22-phosphate (E22P). Has lower activity towards other ecdysteriod phosphates including 20-hydroxyecdysone 22-phosphate (20E22P) and 2-deoxyecdysone 22-phosphate (2dE22P). Also has protein tyrosine phosphatase activity. This chain is Ecdysteroid-phosphate phosphatase, found in Bombyx mori (Silk moth).